The following is a 411-amino-acid chain: C6 finger domain transcription factor hasA (411 aa).

Over residues 1-17 (MTSTLPYLTSPPATHPS) the composition is skewed to polar residues. The interval 1 to 21 (MTSTLPYLTSPPATHPSNSDH) is disordered. The zn(2)-C6 fungal-type DNA-binding region spans 28–54 (CDSCHQCKVKCSGGSPCFRCTSKGLNC).

The protein localises to the nucleus. In terms of biological role, transcription factor; part of the gene cluster that mediates the biosynthesis of hexadehydro-astechrome (HAS), a tryptophan-derived iron(III)-complex that acts as a virulence factor in infected mice. Positively regulates the expression of the HAS biosynthetic genes. This Aspergillus fumigatus (strain CBS 144.89 / FGSC A1163 / CEA10) (Neosartorya fumigata) protein is C6 finger domain transcription factor hasA.